Reading from the N-terminus, the 439-residue chain is MVVSRGKTPNAQETFLQMAQASGLRGRILITVGLLILCRLGIFIPVPGIDRVAFSNDLQGNANLGGVIGFLDIFSGGGLSALGVFALGILPYINASIILQLLTAAVPALEDLQKNEGEAGRRKIAQLTRYVSLGWALLQSIVIAVWVTRYAVTPGPLFTIQTALALVAGSMFVMWISELITERGIGNGASLLIFLNIVATLPRSLQQTLELAQSGDRSTVGGIVILLIVFLATIVGIVFVQEGTRRIPVVSARRQVGNRVYSERSSYLPLRLNQGGVMPIIFASAILVLPFSLANFTSNEVVLRIANYLSPNGPTPWIYALFYLVLIVAFSYFYSSLILNPVDLAQNLKKMGSSIPGVRPGRATSQYVQGVLNRLTILGAVFLGLVAIIPTAVEGATRIRTFQGFGATSLLILVGVAIDTAKQVQTYVISQRYEGMVKD.

The next 10 membrane-spanning stretches (helical) occupy residues 28-48 (ILITVGLLILCRLGIFIPVPG), 73-93 (IFSGGGLSALGVFALGILPYI), 127-147 (LTRYVSLGWALLQSIVIAVWV), 156-176 (PLFTIQTALALVAGSMFVMWI), 179-199 (LITERGIGNGASLLIFLNIVA), 220-240 (VGGIVILLIVFLATIVGIVFV), 276-296 (GVMPIIFASAILVLPFSLANF), 318-338 (IYALFYLVLIVAFSYFYSSLI), 375-395 (LTILGAVFLGLVAIIPTAVEG), and 401-421 (TFQGFGATSLLILVGVAIDTA).

Belongs to the SecY/SEC61-alpha family. As to quaternary structure, component of the Sec protein translocase complex. Heterotrimer consisting of SecY, SecE and SecG subunits. The heterotrimers can form oligomers, although 1 heterotrimer is thought to be able to translocate proteins. Interacts with the ribosome. Interacts with SecDF, and other proteins may be involved. Interacts with SecA.

It localises to the cell inner membrane. The protein resides in the cellular thylakoid membrane. Functionally, the central subunit of the protein translocation channel SecYEG. Consists of two halves formed by TMs 1-5 and 6-10. These two domains form a lateral gate at the front which open onto the bilayer between TMs 2 and 7, and are clamped together by SecE at the back. The channel is closed by both a pore ring composed of hydrophobic SecY resides and a short helix (helix 2A) on the extracellular side of the membrane which forms a plug. The plug probably moves laterally to allow the channel to open. The ring and the pore may move independently. The polypeptide is Protein translocase subunit SecY (Synechococcus elongatus (strain ATCC 33912 / PCC 7942 / FACHB-805) (Anacystis nidulans R2)).